Here is a 163-residue protein sequence, read N- to C-terminus: Transcription antitermination protein NusB (163 aa).

Belongs to the NusB family.

Involved in transcription antitermination. Required for transcription of ribosomal RNA (rRNA) genes. Binds specifically to the boxA antiterminator sequence of the ribosomal RNA (rrn) operons. The polypeptide is Transcription antitermination protein NusB (Mycolicibacterium vanbaalenii (strain DSM 7251 / JCM 13017 / BCRC 16820 / KCTC 9966 / NRRL B-24157 / PYR-1) (Mycobacterium vanbaalenii)).